The primary structure comprises 31 residues: Basic phospholipase A2 13 (31 aa).

This sequence belongs to the phospholipase A2 family. Group I subfamily. Ca(2+) is required as a cofactor. Expressed by the venom gland.

It is found in the secreted. It catalyses the reaction a 1,2-diacyl-sn-glycero-3-phosphocholine + H2O = a 1-acyl-sn-glycero-3-phosphocholine + a fatty acid + H(+). In terms of biological role, snake venom phospholipase A2 (PLA2) that inhibits neuromuscular transmission by blocking acetylcholine release from the nerve termini. PLA2 catalyzes the calcium-dependent hydrolysis of the 2-acyl groups in 3-sn-phosphoglycerides. The sequence is that of Basic phospholipase A2 13 from Bungarus fasciatus (Banded krait).